Reading from the N-terminus, the 678-residue chain is Exoribonuclease 2 (678 aa).

One can recognise an RNB domain in the interval 193–521 (REDLTALPFV…INHRLLKAHI (329 aa)). Residues 568-650 (ETRFQAEIFD…ENRSLVGKPT (83 aa)) form the S1 motif domain. A disordered region spans residues 659-678 (ETQTSAEQPAEGAENNEPQV).

The protein belongs to the RNR ribonuclease family. RNase II subfamily.

Its subcellular location is the cytoplasm. The catalysed reaction is Exonucleolytic cleavage in the 3'- to 5'-direction to yield nucleoside 5'-phosphates.. Functionally, involved in mRNA degradation. Hydrolyzes single-stranded polyribonucleotides processively in the 3' to 5' direction. In Vibrio cholerae serotype O1 (strain ATCC 39315 / El Tor Inaba N16961), this protein is Exoribonuclease 2.